The chain runs to 559 residues: Polypeptide N-acetylgalactosaminyltransferase 1 (559 aa).

The Cytoplasmic segment spans residues 1–8; it reads MRKFAYCK. The helical; Signal-anchor for type II membrane protein transmembrane segment at 9 to 28 threads the bilayer; the sequence is VVLATSLIWVLLDMFLLLYF. Residues 29–559 lie on the Lumenal side of the membrane; that stretch reads SECNKCDEKK…LRNVTLPEIF (531 aa). Residues 45-66 are disordered; sequence GDVLEPVQKPHEGPGEMGKPVV. Asn-95 carries N-linked (GlcNAc...) asparagine glycosylation. 5 disulfide bridges follow: Cys-106-Cys-339, Cys-330-Cys-408, Cys-442-Cys-459, Cys-482-Cys-497, and Cys-523-Cys-540. The tract at residues 115 to 225 is catalytic subdomain A; it reads LPTTSVVIVF…VGWLEPLLAR (111 aa). Substrate-binding residues include Asp-156 and Arg-186. Asp-209 and His-211 together coordinate Mn(2+). The segment at 285–347 is catalytic subdomain B; it reads PVRTPTMAGG…TCSHVGHVFR (63 aa). Residue Trp-316 participates in substrate binding. His-344 is a binding site for Mn(2+). Residues Arg-347 and Tyr-352 each contribute to the substrate site. The Ricin B-type lectin domain occupies 429 to 551; that stretch reads SSLGEIRNVE…GSRSQQWLLR (123 aa). Asn-552 carries an N-linked (GlcNAc...) asparagine glycan.

Belongs to the glycosyltransferase 2 family. GalNAc-T subfamily. Mn(2+) is required as a cofactor.

It localises to the golgi apparatus. It is found in the golgi stack membrane. The protein resides in the secreted. It catalyses the reaction L-seryl-[protein] + UDP-N-acetyl-alpha-D-galactosamine = a 3-O-[N-acetyl-alpha-D-galactosaminyl]-L-seryl-[protein] + UDP + H(+). It carries out the reaction L-threonyl-[protein] + UDP-N-acetyl-alpha-D-galactosamine = a 3-O-[N-acetyl-alpha-D-galactosaminyl]-L-threonyl-[protein] + UDP + H(+). Its pathway is protein modification; protein glycosylation. Catalyzes the initial reaction in O-linked oligosaccharide biosynthesis, the transfer of an N-acetyl-D-galactosamine residue to a serine or threonine residue on the protein receptor. Has a broad spectrum of substrates such as apomucin-, MUC5AC-, MUC1- and MUC2-derived peptides. The sequence is that of Polypeptide N-acetylgalactosaminyltransferase 1 from Sus scrofa (Pig).